The sequence spans 1227 residues: Protein transport protein Sec31A (1227 aa).

WD repeat units lie at residues 4 to 47 (KEID…EIFE), 64 to 111 (SSAH…AGDT), 120 to 160 (KHTG…TPMT), 166 to 206 (QPLE…PIIK), 209 to 254 (DHNN…SPLR), 258 to 298 (SHTR…VLYE), and 301 to 342 (TNMQ…DGLR). Residues 397–430 (SFSFGGKLVTFENAKPQQQPGIDQQPQHHYVYVS) form a WD 8; interaction with SEC13 repeat. Disordered regions lie at residues 804-875 (EAIK…YSQA), 905-1008 (QPVA…GWND), and 1040-1075 (ADPQAQMQQPPAAPVGTPSFQPQQLSTGQQAPLGPY). Residues 905-924 (QPVAAPASASYPSPASNTNP) are compositionally biased toward low complexity. Residues 925 to 945 (PYLPAAQPVPSPLYPGQPQPS) show a composition bias toward pro residues. Positions 995-1006 (PASQRTGPQNGW) are enriched in polar residues. Residues 1040 to 1049 (ADPQAQMQQP) show a composition bias toward low complexity. Positions 1057–1069 (PSFQPQQLSTGQQ) are enriched in polar residues.

Belongs to the WD repeat SEC31 family. In terms of assembly, COPII is composed of at least 5 proteins: the SEC23/24 complex, the SEC13/31 complex and SAR1. SEC13 and SEC31 make a 2:2 tetramer that forms the edge element of the COPII outer coat. The tetramer self-assembles in multiple copies to form the complete polyhedral cage. Interacts (via WD 8) with SEC13.

Its subcellular location is the cytoplasm. The protein localises to the cytoplasmic vesicle. It is found in the COPII-coated vesicle membrane. It localises to the endoplasmic reticulum membrane. Functionally, component of the coat protein complex II (COPII) which promotes the formation of transport vesicles from the endoplasmic reticulum (ER). The coat has two main functions, the physical deformation of the endoplasmic reticulum membrane into vesicles and the selection of cargo molecules. This is Protein transport protein Sec31A (SEC31A) from Gallus gallus (Chicken).